Here is a 207-residue protein sequence, read N- to C-terminus: uncharacterized protein (207 aa).

Residues 1 to 19 (MRFNVSFLLSLLLPTLAFA) form the signal peptide.

To P.multocida PM1509.

This is an uncharacterized protein from Pasteurella multocida (strain Pm70).